Consider the following 72-residue polypeptide: VKRPMNAFMVWSQNERRKIMDQWPDMHNAEISKSLGRSSQLLQDSEKIPFVKEAGRLRLKHMADYPNYKYRP.

Positions 1–69 form a DNA-binding region, HMG box; it reads VKRPMNAFMV…KHMADYPNYK (69 aa).

It is found in the nucleus. This chain is SRY-related protein MG44, found in Tarentola mauritanica (Common wall gecko).